An 82-amino-acid chain; its full sequence is MVTIRLARHGAKKRPFYQVVVTDSRNARNGRFIERVGFFNPLASGAEEETRLDLARVAHWVGLGATVSDRVAALIKAANKAA.

The protein belongs to the bacterial ribosomal protein bS16 family.

This is Small ribosomal subunit protein bS16 from Enterobacter sp. (strain 638).